The sequence spans 206 residues: GTP cyclohydrolase 1 (206 aa).

Residues cysteine 97, histidine 100, and cysteine 168 each coordinate Zn(2+).

It belongs to the GTP cyclohydrolase I family. In terms of assembly, toroid-shaped homodecamer, composed of two pentamers of five dimers.

The enzyme catalyses GTP + H2O = 7,8-dihydroneopterin 3'-triphosphate + formate + H(+). It participates in cofactor biosynthesis; 7,8-dihydroneopterin triphosphate biosynthesis; 7,8-dihydroneopterin triphosphate from GTP: step 1/1. The protein is GTP cyclohydrolase 1 of Chromobacterium violaceum (strain ATCC 12472 / DSM 30191 / JCM 1249 / CCUG 213 / NBRC 12614 / NCIMB 9131 / NCTC 9757 / MK).